The primary structure comprises 480 residues: Glycerol-3-phosphate transporter (480 aa).

Residues 1 to 36 are Cytoplasmic-facing; that stretch reads MFGPFKPAPHIAELPAEKIDSTYKRLRWQVFAGIFF. A helical transmembrane segment spans residues 37-57; sequence GYAAYYFVRANFDLAQPGLIQ. Over 58–64 the chain is Periplasmic; sequence AGLYSKA. Residues 65 to 85 form a helical membrane-spanning segment; sequence ELGVIGSAAGLAYGLSKFVMA. The Cytoplasmic portion of the chain corresponds to 86-94; that stretch reads GMSDRSNPR. The chain crosses the membrane as a helical span at residues 95–113; that stretch reads VFLPFGLLLSGLCMTLMGL. Topologically, residues 114-121 are periplasmic; it reads FPWATSGI. The helical transmembrane segment at 122–142 threads the bilayer; the sequence is AIMWVMIFLNGWFQGMGWPPC. Residues 143 to 161 lie on the Cytoplasmic side of the membrane; it reads GRTMVHWWSKSERGTIVSI. Residues 162-181 traverse the membrane as a helical segment; it reads WNTAHNIGGMVPGAMVLLAS. Topologically, residues 182–201 are periplasmic; sequence AIFFSTHGIEAQAKDVWQQS. A helical membrane pass occupies residues 202-219; sequence LYFPGIAAMIFAIPVYFV. Topologically, residues 220-274 are cytoplasmic; that stretch reads MRDTPQSCGLPSIEKWRNDYPDDYNEKTYENDLTAKEIFVTYVLKNKLLWYIAIA. Residues 275–295 traverse the membrane as a helical segment; the sequence is NVFVYLIRYGVLKWSPVYLSE. The Periplasmic portion of the chain corresponds to 296 to 300; it reads VKHFN. A helical transmembrane segment spans residues 301–321; that stretch reads IKGTAWAYTIYELAAVPGTLL. At 322–334 the chain is on the cytoplasmic side; sequence CGWVSDKVFKGKR. The chain crosses the membrane as a helical span at residues 335–354; that stretch reads GLTGFIFMILTTAAVVAYWM. Topologically, residues 355 to 359 are periplasmic; the sequence is NPATP. A helical transmembrane segment spans residues 360–396; it reads EAELANYSAWYENPYQLTDFVLMTLIGFLIYGPVMLI. At 397–415 the chain is on the cytoplasmic side; sequence GLHALELAPKKAAGTAAGF. A helical membrane pass occupies residues 416 to 437; sequence TGLFGYLGGTVSASAVIGWAAQ. Over 438 to 442 the chain is Periplasmic; sequence HYGWD. Residues 443–463 traverse the membrane as a helical segment; it reads GGFYVMIGGGVLAVLLLLIVM. Over 464–479 the chain is Cytoplasmic; it reads VEEGKHKAKLGDTYGT.

Belongs to the major facilitator superfamily. Organophosphate:Pi antiporter (OPA) (TC 2.A.1.4) family.

The protein localises to the cell inner membrane. Functionally, responsible for glycerol-3-phosphate uptake. The sequence is that of Glycerol-3-phosphate transporter (glpT) from Haemophilus influenzae (strain ATCC 51907 / DSM 11121 / KW20 / Rd).